We begin with the raw amino-acid sequence, 299 residues long: Ribosomal protein L11 methyltransferase (299 aa).

4 residues coordinate S-adenosyl-L-methionine: threonine 139, glycine 166, aspartate 188, and asparagine 231.

The protein belongs to the methyltransferase superfamily. PrmA family.

It localises to the cytoplasm. The enzyme catalyses L-lysyl-[protein] + 3 S-adenosyl-L-methionine = N(6),N(6),N(6)-trimethyl-L-lysyl-[protein] + 3 S-adenosyl-L-homocysteine + 3 H(+). Methylates ribosomal protein L11. This chain is Ribosomal protein L11 methyltransferase, found in Thermosynechococcus vestitus (strain NIES-2133 / IAM M-273 / BP-1).